The primary structure comprises 23 residues: MIGIADVKLLNLGMLFPFVEVES.

It is found in the plastid. It localises to the chloroplast. This is an uncharacterized protein from Zea mays (Maize).